The chain runs to 606 residues: MKKTLLAVALAPLCLPSQVFAADESSNDVMVVTANRFEQPIKNVIAPISVVTKEEIDAIQAKSIAEVLRRLPGVQVVSGGYGQATEVYVRGTTSRHLLVMINGVRIGSATLGSADFSQIPLTGIERIELIRGSRAALYGSDAIGGVLNIITAYQPGESVAEVTAGGGSDGFYQLGGSVAGGLGESGWGKIALKTEGADGFSARKEPFEQDDDGFKNSNVVAEVGTHVGDHWKLSLQGYYHDGESDYDDSYGAPHAQSESSLFNIAAKAGYSNDKLDSQFTVAQNQDENRNFNDVSSGSKIKTERTVANWQNHYQLTDGLELGGGLEWYRDSVSNTGTQYAEDERDNTAVYLTSIYRISDWQFEGSVRTDDNDSYGTNNTWQLATAYNITSELKVSANAGTGFKAPTFNDLYWPDSGNPNLKPEESKNYEISLSGTHQLLDWSITGYQSEIDQLIAWAPKDASNPSGDWIPMNVDEAEIQGIELTAGFATGMLYHDVSYDYLDAKDKGLDKQLIRRSKDSAKWNVSYLAEQWQLDVSAIYKGTSYDDAANTKKLDAYTLVDIAASYFVTDNLSVRGRIANLFDKDYVAKETYNVQERSYYATATYKF.

Residues 1 to 21 (MKKTLLAVALAPLCLPSQVFA) form the signal peptide. Residues 28–35 (DVMVVTAN) carry the TonB box motif. The TBDR plug domain occupies 40–152 (PIKNVIAPIS…IGGVLNIITA (113 aa)). The TBDR beta-barrel domain maps to 157–606 (ESVAEVTAGG…SYYATATYKF (450 aa)). The short motif at 589–606 (ETYNVQERSYYATATYKF) is the TonB C-terminal box element.

The protein belongs to the TonB-dependent receptor family. BtuB (TC 1.B.14.3.1) subfamily.

The protein resides in the cell outer membrane. Functionally, involved in the active translocation of vitamin B12 (cyanocobalamin) across the outer membrane to the periplasmic space. It derives its energy for transport by interacting with the trans-periplasmic membrane protein TonB. The chain is Vitamin B12 transporter BtuB from Photobacterium profundum (strain SS9).